Consider the following 376-residue polypeptide: Sulfate/thiosulfate import ATP-binding protein CysA 1 (376 aa).

The ABC transporter domain maps to isoleucine 3–leucine 237. Glycine 35 to threonine 42 lines the ATP pocket.

The protein belongs to the ABC transporter superfamily. Sulfate/tungstate importer (TC 3.A.1.6) family. The complex is composed of two ATP-binding proteins (CysA), two transmembrane proteins (CysT and CysW) and a solute-binding protein (CysP).

The protein resides in the cell inner membrane. The catalysed reaction is sulfate(out) + ATP + H2O = sulfate(in) + ADP + phosphate + H(+). The enzyme catalyses thiosulfate(out) + ATP + H2O = thiosulfate(in) + ADP + phosphate + H(+). In terms of biological role, part of the ABC transporter complex CysAWTP involved in sulfate/thiosulfate import. Responsible for energy coupling to the transport system. The sequence is that of Sulfate/thiosulfate import ATP-binding protein CysA 1 from Shewanella oneidensis (strain ATCC 700550 / JCM 31522 / CIP 106686 / LMG 19005 / NCIMB 14063 / MR-1).